Here is a 340-residue protein sequence, read N- to C-terminus: Heat-inducible transcription repressor HrcA (340 aa).

The protein belongs to the HrcA family.

Negative regulator of class I heat shock genes (grpE-dnaK-dnaJ and groELS operons). Prevents heat-shock induction of these operons. The protein is Heat-inducible transcription repressor HrcA of Burkholderia cenocepacia (strain HI2424).